A 372-amino-acid chain; its full sequence is Glutamate 5-kinase (372 aa).

Position 14 (K14) interacts with ATP. Residues S54, D141, and N153 each coordinate substrate. Position 173–174 (173–174 (TD)) interacts with ATP. Residues 280-358 (RGHVVIDAGA…GEIESVLGYM (79 aa)) form the PUA domain.

The protein belongs to the glutamate 5-kinase family.

It is found in the cytoplasm. The enzyme catalyses L-glutamate + ATP = L-glutamyl 5-phosphate + ADP. The protein operates within amino-acid biosynthesis; L-proline biosynthesis; L-glutamate 5-semialdehyde from L-glutamate: step 1/2. Its function is as follows. Catalyzes the transfer of a phosphate group to glutamate to form L-glutamate 5-phosphate. The protein is Glutamate 5-kinase of Burkholderia lata (strain ATCC 17760 / DSM 23089 / LMG 22485 / NCIMB 9086 / R18194 / 383).